The chain runs to 83 residues: Small ribosomal subunit protein uS17 (83 aa).

Belongs to the universal ribosomal protein uS17 family. Part of the 30S ribosomal subunit.

Functionally, one of the primary rRNA binding proteins, it binds specifically to the 5'-end of 16S ribosomal RNA. The polypeptide is Small ribosomal subunit protein uS17 (Synechococcus sp. (strain RCC307)).